Reading from the N-terminus, the 320-residue chain is RNA-binding protein Musashi homolog 1 (320 aa).

Low complexity predominate over residues 1–14 (MTTTVSTGATAVAT). The interval 1 to 48 (MTTTVSTGATAVATLRETSPPVDGHEEARLNADSDDGSHGSQDPGKMF) is disordered. Threonine 18 carries the phosphothreonine modification. Serine 19 and serine 34 each carry phosphoserine. A compositionally biased stretch (basic and acidic residues) spans 23 to 38 (DGHEEARLNADSDDGS). RRM domains lie at 45 to 124 (GKMF…FPKR) and 134 to 211 (KKVF…KAQP). 2 required for binding to target mRNAs regions span residues 88 to 93 (FGFITF) and 177 to 182 (FGFVTF).

It belongs to the Musashi family. As to expression, expressed in the gut and in AVA, AFD, RMD, RMED, RMEV, RMER and RMEL neurons (at protein level). In the tail expressed in neurons and all the ray sensilla. Expressed in male specific C1-C4 neurons.

It localises to the cytoplasm. It is found in the perikaryon. Functionally, RNA binding protein that regulates the expression of target mRNAs at the translation level. Binds RNA containing the 5'-[GA]U(1-3)AGU-3' motif located in the 3' UTR of the target mRNA. Binds to the mRNA of three Arp2/3 complex components arx-1, arx-2 and arx-3 and negatively regulates their translation during association learning. Plays a role in time-dependent memory loss and the retention of conditioned behavior over time, probably through negative regulation of the Arp2/3 actin cytoskeleton branching complex and regulation of synapse size. Required for two aspects of male mating behavior: turning around the hermaphrodite head or tail and vulva location. The protein is RNA-binding protein Musashi homolog 1 of Caenorhabditis elegans.